Reading from the N-terminus, the 109-residue chain is Tetraspanin-31 (109 aa).

Residues 1–12 (MVCGGFACSKNA) are Cytoplasmic-facing. A helical membrane pass occupies residues 13 to 33 (LCALNVVYMLVGLLLIGVAAW). Topologically, residues 34–44 (AKGLGLVSSIH) are extracellular. The chain crosses the membrane as a helical span at residues 45-65 (IIGGVIAVGVFLLLIAVAGLV). Topologically, residues 66-72 (GAVNHHQ) are cytoplasmic. Residues 73 to 93 (VLLFFYMIILGLVFIFQFGIS) traverse the membrane as a helical segment. Residues 94–109 (CSCLAINLSKQAGIIN) lie on the Extracellular side of the membrane. An N-linked (GlcNAc...) asparagine glycan is attached at asparagine 100.

It belongs to the tetraspanin (TM4SF) family.

Its subcellular location is the membrane. The sequence is that of Tetraspanin-31 (TSPAN31) from Sus scrofa (Pig).